The following is a 1161-amino-acid chain: Nuclear pore complex-interacting protein family member B11 (1161 aa).

Residues 63–87 (IIIAFPTSYKVVITLWIVYLWVSLL) form a helical membrane-spanning segment. Disordered regions lie at residues 278 to 580 (ADDN…DDNI) and 892 to 1161 (SADD…RRLS). Residues 311-321 (PLPPSAPPSAP) show a composition bias toward pro residues. Basic and acidic residues-rich tracts occupy residues 368–378 (DNIKTTAERLR), 410–420 (DNIKTPAEHLR), 452–462 (DNIKTPAERLR), 494–504 (DNIKTPAEHLR), 536–546 (DNIKTTAEHLR), 918–928 (DNIKTPAERLR), 960–970 (DNIKTPAERLR), 1002–1012 (DNIKTPAERLR), and 1044–1054 (DNIKTPAERLR).

Belongs to the NPIP family.

The protein localises to the membrane. This Homo sapiens (Human) protein is Nuclear pore complex-interacting protein family member B11 (NPIPB11).